The chain runs to 236 residues: Protein YIPF6 (236 aa).

At Ala2 the chain carries N-acetylalanine. The Cytoplasmic portion of the chain corresponds to 2–84 (AEAEDSPGEQ…HVLYPRKSNA (83 aa)). Ser7 is modified (phosphoserine). The chain crosses the membrane as a helical span at residues 85–105 (LLRDWDLWGPLILCVTLALML). At 106-116 (QKSSIDGKNDG) the chain is on the lumenal side. A helical transmembrane segment spans residues 117 to 137 (GGPEFAEVFVIIWFGAVTITL). At 138 to 147 (NSKLLGGNIS) the chain is on the cytoplasmic side. Residues 148–168 (FFQSLCVLGYCILPLNIAMLI) traverse the membrane as a helical segment. The Lumenal portion of the chain corresponds to 169–185 (CRLLLLAGQGPINFMIR). Residues 186-206 (LFVVLLMFAWSVVASTAFLAD) traverse the membrane as a helical segment. Residues 207–213 (SQPPNRK) are Cytoplasmic-facing. A helical transmembrane segment spans residues 214 to 234 (ALAVYPVFLFYFVISWMILTF). At 235-236 (TP) the chain is on the lumenal side.

It belongs to the YIP1 family. As to quaternary structure, predominantly interacts with YIPF1 or YIPF2, but may also form a ternary complex with YIPF1 and YIPF2. This interaction may stabilize YIPF1 and YIPF2.

It localises to the golgi apparatus membrane. May be required for stable YIPF1 and YIPF2 protein expression. The sequence is that of Protein YIPF6 (Yipf6) from Mus musculus (Mouse).